The sequence spans 296 residues: GTPase Era (296 aa).

An Era-type G domain is found at 7–174 (HCGFVAIVGR…LDQVRPHLPE (168 aa)). A G1 region spans residues 15 to 22 (GRPNVGKS). 15–22 (GRPNVGKS) is a GTP binding site. Residues 41-45 (QTTRH) are G2. Residues 62–65 (DTPG) form a G3 region. Residues 62 to 66 (DTPGF) and 123 to 126 (NKLD) each bind GTP. The interval 123-126 (NKLD) is G4. Residues 153–155 (VSA) are G5. Residues 205 to 281 (LGEELPYEMN…FLQVWVKVKS (77 aa)) form the KH type-2 domain.

Belongs to the TRAFAC class TrmE-Era-EngA-EngB-Septin-like GTPase superfamily. Era GTPase family. Monomer.

It localises to the cytoplasm. It is found in the cell inner membrane. Functionally, an essential GTPase that binds both GDP and GTP, with rapid nucleotide exchange. Plays a role in 16S rRNA processing and 30S ribosomal subunit biogenesis and possibly also in cell cycle regulation and energy metabolism. The chain is GTPase Era from Chromobacterium violaceum (strain ATCC 12472 / DSM 30191 / JCM 1249 / CCUG 213 / NBRC 12614 / NCIMB 9131 / NCTC 9757 / MK).